A 428-amino-acid chain; its full sequence is GTPase Obg (428 aa).

Residues 1–158 enclose the Obg domain; it reads MFVDQTKIDV…RTLRLELKVL (158 aa). The OBG-type G domain occupies 159–328; the sequence is ADVGLVGFPS…LMGKTADLVE (170 aa). GTP contacts are provided by residues 165–172, 190–194, 212–215, 282–285, and 309–311; these read GFPSVGKS, FTTLT, DLPG, TQMD, and SSV. Mg(2+) is bound by residues S172 and T192. The region spanning 350 to 428 is the OCT domain; the sequence is YKKPEDEGFK…IADFTFEFVD (79 aa).

It belongs to the TRAFAC class OBG-HflX-like GTPase superfamily. OBG GTPase family. In terms of assembly, monomer. Requires Mg(2+) as cofactor.

It localises to the cytoplasm. An essential GTPase which binds GTP, GDP and possibly (p)ppGpp with moderate affinity, with high nucleotide exchange rates and a fairly low GTP hydrolysis rate. Plays a role in control of the cell cycle, stress response, ribosome biogenesis and in those bacteria that undergo differentiation, in morphogenesis control. The polypeptide is GTPase Obg (Lactobacillus johnsonii (strain CNCM I-12250 / La1 / NCC 533)).